The following is a 239-amino-acid chain: Elongation factor Ts (239 aa).

Residues 82–85 (TDFV) are involved in Mg(2+) ion dislocation from EF-Tu. The interval 213–239 (AAQTKPKAEEKPAAKKATSKKKKGKKK) is disordered. The span at 229–239 (ATSKKKKGKKK) shows a compositional bias: basic residues.

This sequence belongs to the EF-Ts family.

The protein resides in the cytoplasm. Its function is as follows. Associates with the EF-Tu.GDP complex and induces the exchange of GDP to GTP. It remains bound to the aminoacyl-tRNA.EF-Tu.GTP complex up to the GTP hydrolysis stage on the ribosome. In Acaryochloris marina (strain MBIC 11017), this protein is Elongation factor Ts.